The chain runs to 104 residues: Large ribosomal subunit protein uL24 (104 aa).

Belongs to the universal ribosomal protein uL24 family. In terms of assembly, part of the 50S ribosomal subunit.

In terms of biological role, one of two assembly initiator proteins, it binds directly to the 5'-end of the 23S rRNA, where it nucleates assembly of the 50S subunit. One of the proteins that surrounds the polypeptide exit tunnel on the outside of the subunit. This is Large ribosomal subunit protein uL24 from Shewanella pealeana (strain ATCC 700345 / ANG-SQ1).